We begin with the raw amino-acid sequence, 182 residues long: Nuclear cap-binding protein subunit 2 (182 aa).

MRNA is bound by residues tyrosine 13, tyrosine 35, arginine 104–aspartate 108, arginine 115–arginine 119, and glutamine 125–valine 126. Positions asparagine 32 to glycine 110 constitute an RRM domain. A disordered region spans residues glycine 114 to asparagine 182. Positions valine 126–proline 136 are enriched in basic and acidic residues. Positions arginine 145–arginine 175 are enriched in polar residues.

This sequence belongs to the RRM NCBP2 family. As to quaternary structure, component of the nuclear cap-binding complex (CBC), a heterodimer composed of cbc1 and cbc2 that interacts with capped RNAs.

It localises to the cytoplasm. Its subcellular location is the perinuclear region. The protein resides in the nucleus. Functionally, component of the CBC complex, which binds co-transcriptionally to the 5' cap of pre-mRNAs and is involved in maturation, export and degradation of nuclear mRNAs. This Schizosaccharomyces pombe (strain 972 / ATCC 24843) (Fission yeast) protein is Nuclear cap-binding protein subunit 2 (cbc2).